Consider the following 353-residue polypeptide: Quinolinate synthase (353 aa).

Iminosuccinate is bound by residues His47 and Ser68. Cys113 lines the [4Fe-4S] cluster pocket. Iminosuccinate contacts are provided by residues 139-141 (YAN) and Ser156. Position 200 (Cys200) interacts with [4Fe-4S] cluster. Iminosuccinate-binding positions include 226-228 (HPE) and Thr243. Cys297 contributes to the [4Fe-4S] cluster binding site.

This sequence belongs to the quinolinate synthase family. Type 1 subfamily. The cofactor is [4Fe-4S] cluster.

It is found in the cytoplasm. The catalysed reaction is iminosuccinate + dihydroxyacetone phosphate = quinolinate + phosphate + 2 H2O + H(+). It functions in the pathway cofactor biosynthesis; NAD(+) biosynthesis; quinolinate from iminoaspartate: step 1/1. Its function is as follows. Catalyzes the condensation of iminoaspartate with dihydroxyacetone phosphate to form quinolinate. This Yersinia pestis bv. Antiqua (strain Antiqua) protein is Quinolinate synthase.